Here is a 101-residue protein sequence, read N- to C-terminus: Enhancer of yellow 2 transcription factor (101 aa).

This sequence belongs to the ENY2 family. Component of the nuclear pore complex (NPC)-associated TREX-2/AMEX complex (anchoring and mRNA export complex), composed of e(y)2, xmas and PCID2. Within the TREX-2/ AMEX complex, interactions with xmas is required for localization to the nuclear periphery. Component of the SAGA transcription coactivator-HAT complexes, at least composed of Ada2b, e(y)2, Pcaf/Gcn5, Taf10 and Nipped-A/Trrap. Within the SAGA complex, e(y)2, Sgf11, and not/nonstop form an additional subcomplex of SAGA called the DUB module (deubiquitination module). Component of the THO complex, composed of at least e(y)2, HPR1, THO2, THOC5, THOC6 and THOC7. Interacts with Taf9. Interacts with su(Hw) (via zinc fingers). Interacts with the nuclear pore complex (NPC). Interaction between the TREX-2/AMEX complex and the ORC complex is required for ORC localization to mRNPs, and consequently mRNA export. Within the TREX-2/AMEX-ORC complex, interacts with Orc6 and (via N-terminus or C-terminus) with Orc3. Interacts with the zinc finger protein CG9890. In terms of tissue distribution, ubiquitous.

The protein localises to the nucleus. The protein resides in the nucleoplasm. It is found in the cytoplasm. It localises to the nucleus membrane. Functionally, involved in mRNA export coupled transcription activation by association with both the TREX-2/AMEX and the SAGA complexes. The SAGA complex is a multiprotein complex that activates transcription by remodeling chromatin and mediating histone acetylation and deubiquitination. Within the SAGA complex, participates in a subcomplex that specifically deubiquitinates histone H2B. The SAGA complex is recruited to specific gene promoters by activators, where it is required for transcription. Required for nuclear receptor-mediated transactivation. Involved in transcription elongation by recruiting the THO complex onto nascent mRNA. The TREX-2/AMEX complex functions in docking export-competent ribonucleoprotein particles (mRNPs) to the nuclear entrance of the nuclear pore complex (nuclear basket). TREX-2/AMEX participates in mRNA export and accurate chromatin positioning in the nucleus by tethering genes to the nuclear periphery. Recruited to the su(Hw) insulators via its interaction with su(Hw) and participates in the barrier activity of such insulators. In contrast, it does not participate in the enhancer-blocking activity of the su(Hw) insulators. This chain is Enhancer of yellow 2 transcription factor, found in Drosophila melanogaster (Fruit fly).